The sequence spans 398 residues: Tryptophan synthase beta chain (398 aa).

Lys-90 is modified (N6-(pyridoxal phosphate)lysine).

It belongs to the TrpB family. In terms of assembly, tetramer of two alpha and two beta chains. Pyridoxal 5'-phosphate serves as cofactor.

It carries out the reaction (1S,2R)-1-C-(indol-3-yl)glycerol 3-phosphate + L-serine = D-glyceraldehyde 3-phosphate + L-tryptophan + H2O. The protein operates within amino-acid biosynthesis; L-tryptophan biosynthesis; L-tryptophan from chorismate: step 5/5. In terms of biological role, the beta subunit is responsible for the synthesis of L-tryptophan from indole and L-serine. The protein is Tryptophan synthase beta chain of Anoxybacillus flavithermus (strain DSM 21510 / WK1).